A 743-amino-acid polypeptide reads, in one-letter code: Photosystem I P700 chlorophyll a apoprotein A2 (743 aa).

8 helical membrane passes run 46–69 (IFATHFGHVAIIFLWASSLLFHVA), 135–158 (LYMGAVFLLILASVFLFAGWLHLQ), 175–199 (LNHHLAGLFGVSSLAWAGHLIHVAI), 273–291 (MAHHHLAIAVIFIIAGHMY), 336–359 (LHFQLGIHLAALGTITSLVAQHMY), 375–401 (AALYTHHQYIAIFLMLGAFAHGAIFWV), 423–445 (AIISHLSWVSLFLGFHTLGLYVH), and 526–544 (FLVHHAFALALHTTVLILV). Positions 568 and 577 each coordinate [4Fe-4S] cluster. Helical transmembrane passes span 584-605 (AFYLATFWALNTVGWVTFYWHW) and 652-674 (LSVWAWMFLFGHLVWATGFMFLI). Residues His663, Met671, and Tyr679 each coordinate chlorophyll a. Trp680 serves as a coordination point for phylloquinone. A helical transmembrane segment spans residues 716-736 (LVGLTHFTVGYVLTYAAFLIA).

The protein belongs to the PsaA/PsaB family. The PsaA/B heterodimer binds the P700 chlorophyll special pair and subsequent electron acceptors. PSI consists of a core antenna complex that captures photons, and an electron transfer chain that converts photonic excitation into a charge separation. The cyanobacterial PSI reaction center is composed of one copy each of PsaA,B,C,D,E,F,I,J,K,L,M and X, and forms trimeric complexes. PSI electron transfer chain: 5 chlorophyll a, 1 chlorophyll a', 2 phylloquinones and 3 4Fe-4S clusters. PSI core antenna: 90 chlorophyll a, 22 carotenoids, 3 phospholipids and 1 galactolipid. P700 is a chlorophyll a/chlorophyll a' dimer, A0 is one or more chlorophyll a, A1 is one or both phylloquinones and FX is a shared 4Fe-4S iron-sulfur center. serves as cofactor.

The protein localises to the cellular thylakoid membrane. It catalyses the reaction reduced [plastocyanin] + hnu + oxidized [2Fe-2S]-[ferredoxin] = oxidized [plastocyanin] + reduced [2Fe-2S]-[ferredoxin]. In terms of biological role, psaA and PsaB bind P700, the primary electron donor of photosystem I (PSI), as well as the electron acceptors A0, A1 and FX. PSI is a plastocyanin/cytochrome c6-ferredoxin oxidoreductase, converting photonic excitation into a charge separation, which transfers an electron from the donor P700 chlorophyll pair to the spectroscopically characterized acceptors A0, A1, FX, FA and FB in turn. Oxidized P700 is reduced on the lumenal side of the thylakoid membrane by plastocyanin or cytochrome c6. The protein is Photosystem I P700 chlorophyll a apoprotein A2 of Mastigocladus laminosus (Fischerella sp.).